We begin with the raw amino-acid sequence, 307 residues long: D-alanine--D-alanine ligase (307 aa).

In terms of domain architecture, ATP-grasp spans 108–301 (KEVFAAAGLP…FPEFCAWMVE (194 aa)). 135 to 185 (LPPPYVVKPNCEGSSVGVYIVQADANGPPRLAPDMPRDLMVETYIPGRELT) provides a ligand contact to ATP. Asp252, Glu268, and Asn270 together coordinate Mg(2+).

Belongs to the D-alanine--D-alanine ligase family. Requires Mg(2+) as cofactor. The cofactor is Mn(2+).

The protein localises to the cytoplasm. The catalysed reaction is 2 D-alanine + ATP = D-alanyl-D-alanine + ADP + phosphate + H(+). The protein operates within cell wall biogenesis; peptidoglycan biosynthesis. In terms of biological role, cell wall formation. In Cereibacter sphaeroides (strain ATCC 17025 / ATH 2.4.3) (Rhodobacter sphaeroides), this protein is D-alanine--D-alanine ligase.